The sequence spans 132 residues: uncharacterized protein (132 aa).

This is an uncharacterized protein from Caenorhabditis elegans.